The sequence spans 240 residues: tRNA pseudouridine synthase B (240 aa).

The active-site Nucleophile is D48.

Belongs to the pseudouridine synthase TruB family. Type 1 subfamily.

The enzyme catalyses uridine(55) in tRNA = pseudouridine(55) in tRNA. Responsible for synthesis of pseudouridine from uracil-55 in the psi GC loop of transfer RNAs. This chain is tRNA pseudouridine synthase B, found in Bacteroides thetaiotaomicron (strain ATCC 29148 / DSM 2079 / JCM 5827 / CCUG 10774 / NCTC 10582 / VPI-5482 / E50).